The following is a 364-amino-acid chain: uncharacterized protein (364 aa).

This is an uncharacterized protein from Acanthamoeba polyphaga mimivirus (APMV).